The following is a 358-amino-acid chain: Porphobilinogen deaminase, chloroplastic (358 aa).

Residues 1–24 form the signal peptide; it reads MPPPPRCAATTAHHSLLGSPTCLA. C290 is modified (S-(dipyrrolylmethanemethyl)cysteine).

Belongs to the HMBS family. The cofactor is dipyrromethane.

The protein resides in the plastid. The protein localises to the chloroplast. The catalysed reaction is 4 porphobilinogen + H2O = hydroxymethylbilane + 4 NH4(+). The protein operates within porphyrin-containing compound metabolism; protoporphyrin-IX biosynthesis; coproporphyrinogen-III from 5-aminolevulinate: step 2/4. Its pathway is porphyrin-containing compound metabolism; chlorophyll biosynthesis. Its function is as follows. Tetrapolymerization of the monopyrrole PBG into the hydroxymethylbilane pre-uroporphyrinogen in several discrete steps. In Oryza sativa subsp. japonica (Rice), this protein is Porphobilinogen deaminase, chloroplastic (HEMC).